Here is a 531-residue protein sequence, read N- to C-terminus: DNA damage-binding protein cmr1 (531 aa).

Disordered stretches follow at residues 37-83 and 218-264; these read GIFP…RGIA and DASQ…MHIH. Positions 53 to 64 are enriched in basic residues; sequence KPKKKPAPKKIK. The WD 1 repeat unit spans residues 186–227; that stretch reads VTPERIYTMTFHPSEAKPLIFAGDKMGNLGVLDASQERPVSS. Acidic residues predominate over residues 233 to 245; the sequence is GDEEEQEDDDDPD. WD repeat units follow at residues 253 to 293, 300 to 340, 345 to 385, 392 to 431, 454 to 497, and 500 to 531; these read PHTR…SVET, SDDV…RTAV, LSEK…HDDP, LSRL…ASWE, GRWV…LAQL, and DGIT…CLWM.

This sequence belongs to the WD repeat DDB2/WDR76 family.

Functionally, DNA-binding protein that binds to both single- and double-stranded DNA. Binds preferentially to UV-damaged DNA. May be involved in DNA-metabolic processes. The polypeptide is DNA damage-binding protein cmr1 (Aspergillus clavatus (strain ATCC 1007 / CBS 513.65 / DSM 816 / NCTC 3887 / NRRL 1 / QM 1276 / 107)).